We begin with the raw amino-acid sequence, 75 residues long: Small ribosomal subunit protein bS18c (75 aa).

It belongs to the bacterial ribosomal protein bS18 family. Part of the 30S ribosomal subunit.

The protein localises to the plastid. It localises to the chloroplast. In Angiopteris evecta (Mule's foot fern), this protein is Small ribosomal subunit protein bS18c.